A 231-amino-acid polypeptide reads, in one-letter code: Probable transglycosylase SceD (231 aa).

Residues 1–27 (MKKTLLASSLAVGLGIVAGNAGHEAHA) form the signal peptide. Polar residues predominate over residues 93-116 (SAQAPATNNVEPSAVQANQVQSQE). The segment at 93-152 (SAQAPATNNVEPSAVQANQVQSQEVEAPQNAQTQQPQASTSNNSQVTATPTESKASEGSS) is disordered. The span at 119-137 (APQNAQTQQPQASTSNNSQ) shows a compositional bias: low complexity. Residues 138–152 (VTATPTESKASEGSS) show a composition bias toward polar residues.

Belongs to the transglycosylase family. SceD subfamily.

It is found in the secreted. Functionally, is able to cleave peptidoglycan and affects clumping and separation of bacterial cells. This Staphylococcus aureus (strain Mu3 / ATCC 700698) protein is Probable transglycosylase SceD (sceD).